Here is a 431-residue protein sequence, read N- to C-terminus: Magnetosome protein MamH (431 aa).

A run of 11 helical transmembrane segments spans residues 21 to 41, 57 to 77, 86 to 106, 107 to 127, 156 to 176, 178 to 198, 243 to 263, 274 to 294, 302 to 321, 358 to 378, and 380 to 400; these read LLSA…PLFL, ANVQ…LGYL, IIVA…LSPW, IGGA…IMSA, TAFM…QIPA, AGIA…AWLA, MVFV…LIKV, ILIG…RSFI, AVLL…GFII, LLGS…IFFV, and VGGF…TGVG.

It belongs to the major facilitator superfamily.

Its subcellular location is the magnetosome membrane. Required for correct biomineralization of the magnetosome; probably transports some form of iron. Partially functionally redundant with MamZ. In Paramagnetospirillum magneticum (strain ATCC 700264 / AMB-1) (Magnetospirillum magneticum), this protein is Magnetosome protein MamH (mamH).